Here is a 396-residue protein sequence, read N- to C-terminus: Elongation factor Tu (396 aa).

One can recognise a tr-type G domain in the interval 10–206 (KPHLNIGTIG…AVDENVPDPV (197 aa)). Residues 19–26 (GHVDHGKT) form a G1 region. 19-26 (GHVDHGKT) provides a ligand contact to GTP. T26 contributes to the Mg(2+) binding site. The tract at residues 62–66 (GITIN) is G2. The G3 stretch occupies residues 83 to 86 (DAPG). Residues 83 to 87 (DAPGH) and 138 to 141 (NKSD) each bind GTP. A G4 region spans residues 138–141 (NKSD). Residues 176-178 (SAL) form a G5 region.

This sequence belongs to the TRAFAC class translation factor GTPase superfamily. Classic translation factor GTPase family. EF-Tu/EF-1A subfamily. As to quaternary structure, monomer.

The protein resides in the cytoplasm. It carries out the reaction GTP + H2O = GDP + phosphate + H(+). In terms of biological role, GTP hydrolase that promotes the GTP-dependent binding of aminoacyl-tRNA to the A-site of ribosomes during protein biosynthesis. This Kocuria rhizophila (strain ATCC 9341 / DSM 348 / NBRC 103217 / DC2201) protein is Elongation factor Tu.